The chain runs to 678 residues: Penicillin-binding protein activator LpoA (678 aa).

The signal sequence occupies residues Met1–Gly26. A lipid anchor (N-palmitoyl cysteine) is attached at Cys27. The S-diacylglycerol cysteine moiety is linked to residue Cys27. Disordered regions lie at residues Asp302–Ala340 and Ala496–Phe528. Low complexity-rich tracts occupy residues Gln330–Ala340 and Thr513–Phe528.

Belongs to the LpoA family. Interacts with PBP1a.

It is found in the cell outer membrane. In terms of biological role, regulator of peptidoglycan synthesis that is essential for the function of penicillin-binding protein 1A (PBP1a). In Shigella sonnei (strain Ss046), this protein is Penicillin-binding protein activator LpoA.